We begin with the raw amino-acid sequence, 132 residues long: Small ribosomal subunit protein uS8 (132 aa).

The protein belongs to the universal ribosomal protein uS8 family. In terms of assembly, part of the 30S ribosomal subunit. Contacts proteins S5 and S12.

Its function is as follows. One of the primary rRNA binding proteins, it binds directly to 16S rRNA central domain where it helps coordinate assembly of the platform of the 30S subunit. This is Small ribosomal subunit protein uS8 from Brucella abortus (strain S19).